We begin with the raw amino-acid sequence, 624 residues long: Forkhead box protein O1 (624 aa).

Disordered regions lie at residues 1–62 (MAEA…PSAS) and 94–128 (APLS…SRRN). Residue Thr24 is modified to Phosphothreonine; by PKB/AKT1 or PKB/AKT2 and SGK1. Composition is skewed to low complexity over residues 37–62 (SATS…PSAS) and 105–119 (AAAA…AGQP). The segment at residues 130–224 (WGNLSYADLI…KSGKSPRRRA (95 aa)) is a DNA-binding region (fork-head). DNA-binding regions lie at residues 181 to 188 (NSIRHNLS) and 204 to 207 (SSWW). The residue at position 182 (Ser182) is a Phosphoserine; by STK4/MST1. A phosphoserine mark is found at Ser188, Ser204, and Ser205. Positions 204–306 (SSWWMLNPEG…RLSPIMTEQD (103 aa)) are disordered. An N6-acetyllysine mark is found at Lys215 and Lys218. Ser219 bears the Phosphoserine; by CDK1 mark. Omega-N-methylarginine; by PRMT1 is present on residues Arg221 and Arg223. Positions 221–223 (RRR) match the Nuclear localization signal motif. Position 226 is a phosphoserine; by PKB/AKT1 and SGK1 (Ser226). Residues Lys232, Lys235, and Lys244 each carry the N6-acetyllysine modification. The span at 234 to 245 (AKSRGRAAKKKA) shows a compositional bias: basic residues. Residues 253–532 (GAGDSPGSQF…RLAPVKTALQ (280 aa)) are sufficient for interaction with NLK. 2 positions are modified to phosphoserine: Ser257 and Ser268. A compositionally biased stretch (polar residues) spans 279–296 (NWSTFRPRTSSNASTISG). Ser289 is subject to Phosphoserine; by PKB/AKT1. Ser292 carries the phosphoserine; by CK1 and SGK1 modification. Ser295 carries the post-translational modification Phosphoserine; by CK1. Residue Ser299 is modified to Phosphoserine; by DYRK1A. Thr303 bears the Phosphothreonine mark. Residues 333 to 428 (SEISNPENME…YGGMSQYCAP (96 aa)) form a required for interaction with RUNX2 region. Lys393 bears the N6-acetyllysine mark. The Required for interaction with SIRT1 motif lies at 431 to 435 (LKELL).

Interacts with LRPPRC. Interacts with RUNX2; the interaction inhibits RUNX2 transcriptional activity and mediates the IGF1/insulin-dependent BGLAP expression in osteoblasts Interacts with PPP2R1A; the interaction regulates the dephosphorylation of FOXO1 at Thr-24 and Ser-263 leading to its nuclear import. Interacts with NLK. Interacts with SIRT1; the interaction results in the deacetylation of FOXO1 leading to activation of FOXO1-mediated transcription of genes involved in DNA repair and stress resistance. Binds to CDK1. Interacts with the 14-3-3 proteins, YWHAG and YWHAZ; the interactions require insulin-stimulated phosphorylation on Thr-24, promote nuclear exit and loss of transcriptional activity. Interacts with SKP2; the interaction ubiquitinates FOXO1 leading to its proteasomal degradation. The interaction requires the presence of KRIT1. Interacts (via the C-terminal half) with ATF4 (via its DNA binding domain); the interaction occurs in osteoblasts, regulates glucose homeostasis via suppression of beta-cell proliferation and subsequent decrease in insulin production. Interacts with PRMT1; the interaction methylates FOXO1, prevents PKB/AKT1 phosphorylation and retains FOXO1 in the nucleus. Interacts with EP300 and CREBBP; the interactions acetylate FOXO1. Interacts with SIRT2; the interaction is disrupted in response to oxidative stress or serum deprivation, leading to increased level of acetylated FOXO1, which promotes stress-induced autophagy by stimulating E1-like activating enzyme ATG7. Interacts (acetylated form) with ATG7; the interaction is increased in response to oxidative stress or serum deprivation and promotes the autophagic process leading to cell death. Interacts (acetylated form) with PPARG. Interacts with XBP1; this interaction is direct and leads to FOXO1 ubiquitination and degradation via the proteasome pathway. Interacts (via the Fork-head domain) with CEBPA; the interaction increases when FOXO1 is deacetylated. Interacts with WDFY2. Forms a complex with WDFY2 and AKT1. Interacts with CRY1. Interacts with PPIA/CYPA; the interaction promotes FOXO1 dephosphorylation, nuclear accumulation and transcriptional activity. Interacts with TOX4; FOXO1 is required for full induction of TOX4-dependent activity and the interaction is inhibited by insulin. Interacts (when phosphorylated on Ser-226) with STUB1/CHIP. Phosphorylation by NLK promotes nuclear export and inhibits the transcriptional activity. In response to growth factors, phosphorylation on Thr-24, Ser-226 and Ser-292 by PKB/AKT1 promotes nuclear export and inactivation of transactivational activity. Phosphorylation on Thr-24 is required for binding 14-3-3 proteins. Phosphorylation of Ser-226 decreases DNA-binding activity and promotes the phosphorylation of Thr-24 and Ser-289, permitting phosphorylation of Ser-292 and Ser-295, probably by CDK1, leading to nuclear exclusion and loss of function. Stress signals, such as response to oxygen or nitric oxide, attenuate the PKB/AKT1-mediated phosphorylation leading to nuclear retention. Phosphorylation of Ser-299 is independent of IGF1 and leads to reduced function. Dephosphorylated on Thr-24 and Ser-226 by PP2A in beta-cells under oxidative stress leading to nuclear retention. Phosphorylation of Ser-219 by CDK1 disrupts binding of 14-3-3 proteins leading to nuclear accumulation and has no effect on DNA binding nor transcriptional activity. Phosphorylation by STK4/MST1 on Ser-182, upon oxidative stress, inhibits binding to 14-3-3 proteins and nuclear export. PPIA/CYPA promotes its dephosphorylation on Ser-226. In terms of processing, ubiquitinated by SKP2. Ubiquitination leads to proteasomal degradation. Ubiquitinated by STUB1/CHIP; when Ser-226 is phosphorylated. Post-translationally, methylation inhibits AKT1-mediated phosphorylation at Ser-226 and is increased by oxidative stress. Acetylated. Acetylation at Lys-232 and Lys-244 are necessary for autophagic cell death induction. Deacetylated by SIRT2 in response to oxidative stress or serum deprivation, thereby negatively regulating FOXO1-mediated autophagic cell death. Once in the nucleus, acetylated by CREBBP/EP300. Acetylation diminishes the interaction with target DNA and attenuates the transcriptional activity. It increases the phosphorylation at Ser-226. Deacetylation by SIRT1 results in reactivation of the transcriptional activity. Oxidative stress by hydrogen peroxide treatment appears to promote deacetylation and uncoupling of insulin-induced phosphorylation. By contrast, resveratrol acts independently of acetylation. Acetylated at Lys-393, promoting its localization to the nucleus and transcription factor activity. Deacetylation at Lys-393 by SIRT6, promotes its translocation into the cytoplasm, preventing its transcription factor activity. Deacetylation and subsequent inhibition by SIRT6 has different effects depending on cell types: it inhibits gluconeogenesis in hepatocytes, promotes glucose sensing in pancreatic beta-cells and regulates lipid catabolism in brown adipocytes.

It localises to the cytoplasm. Its subcellular location is the nucleus. Functionally, transcription factor that is the main target of insulin signaling and regulates metabolic homeostasis in response to oxidative stress. Binds to the insulin response element (IRE) with consensus sequence 5'-TT[G/A]TTTTG-3' and the related Daf-16 family binding element (DBE) with consensus sequence 5'-TT[G/A]TTTAC-3'. Activity suppressed by insulin. Main regulator of redox balance and osteoblast numbers and controls bone mass. Orchestrates the endocrine function of the skeleton in regulating glucose metabolism. Also acts as a key regulator of chondrogenic commitment of skeletal progenitor cells in response to lipid availability: when lipids levels are low, translocates to the nucleus and promotes expression of SOX9, which induces chondrogenic commitment and suppresses fatty acid oxidation. Acts synergistically with ATF4 to suppress osteocalcin/BGLAP activity, increasing glucose levels and triggering glucose intolerance and insulin insensitivity. Also suppresses the transcriptional activity of RUNX2, an upstream activator of osteocalcin/BGLAP. Acts as an inhibitor of glucose sensing in pancreatic beta cells by acting as a transcription repressor and suppressing expression of PDX1. In hepatocytes, promotes gluconeogenesis by acting together with PPARGC1A and CEBPA to activate the expression of genes such as IGFBP1, G6PC1 and PCK1. Also promotes gluconeogenesis by directly promoting expression of PPARGC1A and G6PC1. Important regulator of cell death acting downstream of CDK1, PKB/AKT1 and STK4/MST1. Promotes neural cell death. Mediates insulin action on adipose tissue. Regulates the expression of adipogenic genes such as PPARG during preadipocyte differentiation and, adipocyte size and adipose tissue-specific gene expression in response to excessive calorie intake. Regulates the transcriptional activity of GADD45A and repair of nitric oxide-damaged DNA in beta-cells. Required for the autophagic cell death induction in response to starvation or oxidative stress in a transcription-independent manner. Mediates the function of MLIP in cardiomyocytes hypertrophy and cardiac remodeling. Positive regulator of apoptosis in cardiac smooth muscle cells as a result of its transcriptional activation of pro-apoptotic genes. Regulates endothelial cell (EC) viability and apoptosis in a PPIA/CYPA-dependent manner via transcription of CCL2 and BCL2L11 which are involved in EC chemotaxis and apoptosis. This chain is Forkhead box protein O1 (FOXO1), found in Bos taurus (Bovine).